A 299-amino-acid chain; its full sequence is GTPase Era (299 aa).

The Era-type G domain occupies 4-171 (KSGFVAILGR…ISLLTDNLEE (168 aa)). The tract at residues 12–19 (GRPNVGKS) is G1. 12-19 (GRPNVGKS) contributes to the GTP binding site. A G2 region spans residues 38–42 (QTTRN). The tract at residues 59–62 (DTPG) is G3. Residues 59 to 63 (DTPGI) and 121 to 124 (NKID) each bind GTP. The tract at residues 121–124 (NKID) is G4. Residues 150–152 (ISA) are G5. The KH type-2 domain occupies 202-280 (TQQEIPHSVA…YLETWVKVKK (79 aa)).

It belongs to the TRAFAC class TrmE-Era-EngA-EngB-Septin-like GTPase superfamily. Era GTPase family. In terms of assembly, monomer.

Its subcellular location is the cytoplasm. It is found in the cell membrane. Its function is as follows. An essential GTPase that binds both GDP and GTP, with rapid nucleotide exchange. Plays a role in 16S rRNA processing and 30S ribosomal subunit biogenesis and possibly also in cell cycle regulation and energy metabolism. The protein is GTPase Era of Streptococcus uberis (strain ATCC BAA-854 / 0140J).